We begin with the raw amino-acid sequence, 740 residues long: Catalase-peroxidase (740 aa).

A signal peptide spans 1–27 (MFKSTLPIAAAISVALTSMVLPAKALA). The segment at residues 106–228 (WHSAGVYRVH…LAAVEMGLIY (123 aa)) is a cross-link (tryptophyl-tyrosyl-methioninium (Trp-Tyr) (with M-254)). H107 (proton acceptor) is an active-site residue. A cross-link (tryptophyl-tyrosyl-methioninium (Tyr-Met) (with W-106)) is located at residues 228-254 (YVNPEGPHGKPDPLLAANDIRMSFGRM). H269 is a binding site for heme b.

It belongs to the peroxidase family. Peroxidase/catalase subfamily. In terms of assembly, homodimer or homotetramer. The cofactor is heme b. Formation of the three residue Trp-Tyr-Met cross-link is important for the catalase, but not the peroxidase activity of the enzyme.

It catalyses the reaction H2O2 + AH2 = A + 2 H2O. It carries out the reaction 2 H2O2 = O2 + 2 H2O. Functionally, bifunctional enzyme with both catalase and broad-spectrum peroxidase activity. The sequence is that of Catalase-peroxidase from Colwellia psychrerythraea (strain 34H / ATCC BAA-681) (Vibrio psychroerythus).